A 61-amino-acid polypeptide reads, in one-letter code: Metallothionein-1 (61 aa).

The residue at position 1 (Met1) is an N-acetylmethionine. A beta region spans residues 1–29; sequence MDPNCSCSTGSTCTCSSSCGCKDCKCTSC. Residues Cys5, Cys7, Cys13, Cys15, Cys19, Cys21, Cys24, Cys26, Cys29, Cys33, Cys34, Cys36, Cys37, Cys41, Cys44, Cys48, Cys50, Cys57, Cys59, and Cys60 each coordinate a divalent metal cation. The alpha stretch occupies residues 30 to 61; the sequence is KKSCCSCCPVGCSKCAQGCVCKGASDKCTCCA.

This sequence belongs to the metallothionein superfamily. Type 1 family.

Metallothioneins have a high content of cysteine residues that bind various heavy metals; these proteins are transcriptionally regulated by both heavy metals and glucocorticoids. The polypeptide is Metallothionein-1 (MT1) (Cricetulus griseus (Chinese hamster)).